A 129-amino-acid polypeptide reads, in one-letter code: Ribosome-binding factor A (129 aa).

Belongs to the RbfA family. In terms of assembly, monomer. Binds 30S ribosomal subunits, but not 50S ribosomal subunits or 70S ribosomes.

Its subcellular location is the cytoplasm. Functionally, one of several proteins that assist in the late maturation steps of the functional core of the 30S ribosomal subunit. Associates with free 30S ribosomal subunits (but not with 30S subunits that are part of 70S ribosomes or polysomes). Required for efficient processing of 16S rRNA. May interact with the 5'-terminal helix region of 16S rRNA. The sequence is that of Ribosome-binding factor A from Gloeobacter violaceus (strain ATCC 29082 / PCC 7421).